A 132-amino-acid polypeptide reads, in one-letter code: Tumor suppressor ARF (132 aa).

The segment at 1 to 64 (MVRRFLVTLR…LGQQPLPRRP (64 aa)) is interaction with CDK5RAP3 and MDM2. Positions 56 to 132 (GQQPLPRRPG…CLGPSARGPG (77 aa)) are disordered. The span at 71-83 (RPSGGAAAAPRRG) shows a compositional bias: low complexity. Residues 84 to 99 (AQLRRPRHSHPTRARR) show a composition bias toward basic residues. Residues 103–117 (GLPGHAGGAAPGRGA) are compositionally biased toward gly residues.

As to quaternary structure, does not interact with cyclins, CDK1, CDK2, CDK4, CDK5 or CDK6. Binds to BCL6, E2F1, HUWE1, MDM2, MYC, NPM1/B23, TOP1/TOPOI and UBE2I/UBC9. Interacts with TBRG1 and COMMD1. Interacts with CDKN2AIP and E4F1. Interacts with CDK5RAP3 and MDM2; form a ternary complex involved in regulation of p53/TP53. Interacts with NOP53; the interaction is direct and promotes ARF nucleoplasmic relocalization and ubiquitin-mediated proteasomal degradation. Interacts with TTF1 (via the N-terminal region (NRD) and a C-terminal region); the interaction is direct and inhibits the nucleolar localization of TTF1. In terms of assembly, interacts with C1QBP. Ubiquitinated in normal cells by TRIP12 via the ubiquitin fusion degradation (UFD) pathway, a process that mediates ubiquitination at the N-terminus, regardless of the absence of lysine residues. Ubiquitination leads to its proteasomal degradation. In cancer cells, however, TRIP12 is located in a different cell compartment, preventing ubiquitination and degradation.

The protein localises to the nucleus. It localises to the nucleolus. The protein resides in the nucleoplasm. Its subcellular location is the mitochondrion. Capable of inducing cell cycle arrest in G1 and G2 phases. Acts as a tumor suppressor. Binds to MDM2 and blocks its nucleocytoplasmic shuttling by sequestering it in the nucleolus. This inhibits the oncogenic action of MDM2 by blocking MDM2-induced degradation of p53 and enhancing p53-dependent transactivation and apoptosis. Also induces G2 arrest and apoptosis in a p53-independent manner by preventing the activation of cyclin B1/CDC2 complexes. Binds to BCL6 and down-regulates BCL6-induced transcriptional repression. Binds to E2F1 and MYC and blocks their transcriptional activator activity but has no effect on MYC transcriptional repression. Binds to TOP1/TOPOI and stimulates its activity. This complex binds to rRNA gene promoters and may play a role in rRNA transcription and/or maturation. Interacts with NPM1/B23 and promotes its polyubiquitination and degradation, thus inhibiting rRNA processing. Plays a role in inhibiting ribosome biogenesis, perhaps by binding to the nucleolar localization sequence of transcription termination factor TTF1, and thereby preventing nucleolar localization of TTF1. Interacts with COMMD1 and promotes its 'Lys63'-linked polyubiquitination. Interacts with UBE2I/UBC9 and enhances sumoylation of a number of its binding partners including MDM2 and E2F1. Binds to HUWE1 and represses its ubiquitin ligase activity. May play a role in controlling cell proliferation and apoptosis during mammary gland development. In terms of biological role, may be involved in regulation of autophagy and caspase-independent cell death; the short-lived mitochondrial isoform is stabilized by C1QBP. This Homo sapiens (Human) protein is Tumor suppressor ARF.